A 200-amino-acid chain; its full sequence is Guanylate kinase (200 aa).

In terms of domain architecture, Guanylate kinase-like spans glycine 4–arginine 183. Glycine 11–serine 18 is a binding site for ATP.

Belongs to the guanylate kinase family.

It is found in the cytoplasm. The enzyme catalyses GMP + ATP = GDP + ADP. Functionally, essential for recycling GMP and indirectly, cGMP. In Helicobacter hepaticus (strain ATCC 51449 / 3B1), this protein is Guanylate kinase.